A 192-amino-acid polypeptide reads, in one-letter code: Protein GrpE (192 aa).

Residues 1–20 (MEERNEQVVEEVKEEVKEAQ) are compositionally biased toward basic and acidic residues. Residues 1 to 39 (MEERNEQVVEEVKEEVKEAQVEEAVTSEDSEESVEEKSE) form a disordered region. A compositionally biased stretch (acidic residues) spans 25-34 (VTSEDSEESV).

Belongs to the GrpE family. Homodimer.

It localises to the cytoplasm. Functionally, participates actively in the response to hyperosmotic and heat shock by preventing the aggregation of stress-denatured proteins, in association with DnaK and GrpE. It is the nucleotide exchange factor for DnaK and may function as a thermosensor. Unfolded proteins bind initially to DnaJ; upon interaction with the DnaJ-bound protein, DnaK hydrolyzes its bound ATP, resulting in the formation of a stable complex. GrpE releases ADP from DnaK; ATP binding to DnaK triggers the release of the substrate protein, thus completing the reaction cycle. Several rounds of ATP-dependent interactions between DnaJ, DnaK and GrpE are required for fully efficient folding. This chain is Protein GrpE, found in Bacillus cereus (strain ATCC 10987 / NRS 248).